The chain runs to 459 residues: Argininosuccinate lyase (459 aa).

The protein belongs to the lyase 1 family. Argininosuccinate lyase subfamily.

It is found in the cytoplasm. The enzyme catalyses 2-(N(omega)-L-arginino)succinate = fumarate + L-arginine. The protein operates within amino-acid biosynthesis; L-arginine biosynthesis; L-arginine from L-ornithine and carbamoyl phosphate: step 3/3. The polypeptide is Argininosuccinate lyase (Prochlorococcus marinus (strain MIT 9215)).